The following is a 378-amino-acid chain: MGQSKKLNNQPRSLSPLVLLSGISKSFDGKEVISQLDLTINNGEFLTLLGPSGCGKTTVLRLIAGLETVDAGHIMLDNQDITHVPAENRYVNTVFQSYALFPHMTVFENVAFGLRMQKTPAAEIAPRVTDALRMVQLEEFAQRKPHQLSGGQQQRVAIARAVVNKPRLLLLDESLSALDYKLRKQMQNELKALQRKLGITFVFVTHDQEEALTMSDRIVVMRNGVIEQDGTPREIYEEPKNLFVAGFIGEINRFDATVIERLDEQRVRASVEGRECNIYVNFAVEPGQKLNVLLRPEDLRVEEINDDNHIEGLIGYVRERNYKGMTLESVVELENGKMVMVSEFFNEDDPDFDHSLDQKMAISWVESWEVVLADEEHK.

Residues 18–248 (VLLSGISKSF…PKNLFVAGFI (231 aa)) form the ABC transporter domain. 50-57 (GPSGCGKT) is an ATP binding site.

Belongs to the ABC transporter superfamily. Spermidine/putrescine importer (TC 3.A.1.11.1) family. As to quaternary structure, the complex is composed of two ATP-binding proteins (PotA), two transmembrane proteins (PotB and PotC) and a solute-binding protein (PotD).

Its subcellular location is the cell inner membrane. It carries out the reaction ATP + H2O + polyamine-[polyamine-binding protein]Side 1 = ADP + phosphate + polyamineSide 2 + [polyamine-binding protein]Side 1.. Part of the ABC transporter complex PotABCD involved in spermidine/putrescine import. Responsible for energy coupling to the transport system. The chain is Spermidine/putrescine import ATP-binding protein PotA from Salmonella choleraesuis (strain SC-B67).